The primary structure comprises 197 residues: uncharacterized protein (197 aa).

The span at 1-10 (MKNNYTSLKS) shows a compositional bias: polar residues. 2 disordered regions span residues 1–46 (MKNN…PPYS) and 54–73 (LVPEDSSTGPTETANPNVER). Positions 18–37 (LKTGHEIDLEKGPLPEHNSE) are enriched in basic and acidic residues. Residues 58 to 69 (DSSTGPTETANP) are compositionally biased toward polar residues. 2 helical membrane-spanning segments follow: residues 83–105 (NIYSLLRLLIAVLAVSVVFFTAW) and 120–142 (AFFVLIGLTCLILLITMILEPGL).

Belongs to the WTF family.

It localises to the endoplasmic reticulum membrane. This is an uncharacterized protein from Schizosaccharomyces pombe (strain 972 / ATCC 24843) (Fission yeast).